A 127-amino-acid chain; its full sequence is Fluoride-specific ion channel FluC 1 (127 aa).

The next 4 helical transmembrane spans lie at 4–24 (TLLAVFIGGGVGSMARWLVSL), 35–55 (VGTLIVNLVGAFIIGLTLAFF), 71–91 (TGFCGGLTTFSTFSVEVVYLI), and 101–121 (GTILLNVAGSLAMTMLAFILV). Na(+)-binding residues include Gly-75 and Thr-78.

The protein belongs to the fluoride channel Fluc/FEX (TC 1.A.43) family.

The protein resides in the cell inner membrane. It catalyses the reaction fluoride(in) = fluoride(out). Its activity is regulated as follows. Na(+) is not transported, but it plays an essential structural role and its presence is essential for fluoride channel function. Functionally, fluoride-specific ion channel. Important for reducing fluoride concentration in the cell, thus reducing its toxicity. This is Fluoride-specific ion channel FluC 1 from Yersinia pestis.